The primary structure comprises 616 residues: Dihydroxy-acid dehydratase (616 aa).

Residue aspartate 81 coordinates Mg(2+). Cysteine 122 is a [2Fe-2S] cluster binding site. Aspartate 123 and lysine 124 together coordinate Mg(2+). Residue lysine 124 is modified to N6-carboxylysine. Position 195 (cysteine 195) interacts with [2Fe-2S] cluster. Mg(2+) is bound at residue glutamate 491. Catalysis depends on serine 517, which acts as the Proton acceptor.

This sequence belongs to the IlvD/Edd family. In terms of assembly, homodimer. [2Fe-2S] cluster serves as cofactor. Mg(2+) is required as a cofactor.

The enzyme catalyses (2R)-2,3-dihydroxy-3-methylbutanoate = 3-methyl-2-oxobutanoate + H2O. It catalyses the reaction (2R,3R)-2,3-dihydroxy-3-methylpentanoate = (S)-3-methyl-2-oxopentanoate + H2O. Its pathway is amino-acid biosynthesis; L-isoleucine biosynthesis; L-isoleucine from 2-oxobutanoate: step 3/4. The protein operates within amino-acid biosynthesis; L-valine biosynthesis; L-valine from pyruvate: step 3/4. Functionally, functions in the biosynthesis of branched-chain amino acids. Catalyzes the dehydration of (2R,3R)-2,3-dihydroxy-3-methylpentanoate (2,3-dihydroxy-3-methylvalerate) into 2-oxo-3-methylpentanoate (2-oxo-3-methylvalerate) and of (2R)-2,3-dihydroxy-3-methylbutanoate (2,3-dihydroxyisovalerate) into 2-oxo-3-methylbutanoate (2-oxoisovalerate), the penultimate precursor to L-isoleucine and L-valine, respectively. This Klebsiella pneumoniae subsp. pneumoniae (strain ATCC 700721 / MGH 78578) protein is Dihydroxy-acid dehydratase.